A 217-amino-acid polypeptide reads, in one-letter code: Resolvase homolog YneB (217 aa).

The 146-residue stretch at 2–147 folds into the Resolvase/invertase-type recombinase catalytic domain; the sequence is KALIYARVST…RGMKRAVKNG (146 aa). Ser-10 serves as the catalytic O-(5'-phospho-DNA)-serine intermediate.

This sequence belongs to the site-specific recombinase resolvase family.

The polypeptide is Resolvase homolog YneB (yneB) (Bacillus subtilis (strain 168)).